Here is a 127-residue protein sequence, read N- to C-terminus: Major sperm protein 152 (127 aa).

Thr2 is subject to N-acetylthreonine. One can recognise an MSP domain in the interval 9-126 (DIQTQPGTKI…RRKNLPIEYN (118 aa)).

In terms of tissue distribution, sperm.

It localises to the cell projection. It is found in the pseudopodium. The protein resides in the cytoplasm. The protein localises to the cytoskeleton. Functionally, central component in molecular interactions underlying sperm crawling. Forms an extensive filament system that extends from sperm villipoda, along the leading edge of the pseudopod. In Caenorhabditis elegans, this protein is Major sperm protein 152 (msp-152).